We begin with the raw amino-acid sequence, 330 residues long: tRNA U34 carboxymethyltransferase (330 aa).

Carboxy-S-adenosyl-L-methionine is bound by residues lysine 91, tryptophan 105, lysine 110, glycine 130, 152 to 154, 181 to 182, methionine 196, tyrosine 200, and arginine 315; these read DPS and IE.

The protein belongs to the class I-like SAM-binding methyltransferase superfamily. CmoB family. Homotetramer.

The enzyme catalyses carboxy-S-adenosyl-L-methionine + 5-hydroxyuridine(34) in tRNA = 5-carboxymethoxyuridine(34) in tRNA + S-adenosyl-L-homocysteine + H(+). Catalyzes carboxymethyl transfer from carboxy-S-adenosyl-L-methionine (Cx-SAM) to 5-hydroxyuridine (ho5U) to form 5-carboxymethoxyuridine (cmo5U) at position 34 in tRNAs. The polypeptide is tRNA U34 carboxymethyltransferase (Shewanella denitrificans (strain OS217 / ATCC BAA-1090 / DSM 15013)).